Reading from the N-terminus, the 96-residue chain is Aspartyl/glutamyl-tRNA(Asn/Gln) amidotransferase subunit C (96 aa).

The protein belongs to the GatC family. Heterotrimer of A, B and C subunits.

The catalysed reaction is L-glutamyl-tRNA(Gln) + L-glutamine + ATP + H2O = L-glutaminyl-tRNA(Gln) + L-glutamate + ADP + phosphate + H(+). It catalyses the reaction L-aspartyl-tRNA(Asn) + L-glutamine + ATP + H2O = L-asparaginyl-tRNA(Asn) + L-glutamate + ADP + phosphate + 2 H(+). In terms of biological role, allows the formation of correctly charged Asn-tRNA(Asn) or Gln-tRNA(Gln) through the transamidation of misacylated Asp-tRNA(Asn) or Glu-tRNA(Gln) in organisms which lack either or both of asparaginyl-tRNA or glutaminyl-tRNA synthetases. The reaction takes place in the presence of glutamine and ATP through an activated phospho-Asp-tRNA(Asn) or phospho-Glu-tRNA(Gln). The sequence is that of Aspartyl/glutamyl-tRNA(Asn/Gln) amidotransferase subunit C from Herpetosiphon aurantiacus (strain ATCC 23779 / DSM 785 / 114-95).